The primary structure comprises 868 residues: Leucine--tRNA ligase (868 aa).

The 'HIGH' region signature appears at 42-52; the sequence is PYPSGKLHMGH. Positions 624 to 628 match the 'KMSKS' region motif; it reads TMSKS. Lys-627 contributes to the ATP binding site.

The protein belongs to the class-I aminoacyl-tRNA synthetase family.

Its subcellular location is the cytoplasm. It carries out the reaction tRNA(Leu) + L-leucine + ATP = L-leucyl-tRNA(Leu) + AMP + diphosphate. The protein is Leucine--tRNA ligase of Nitrosomonas eutropha (strain DSM 101675 / C91 / Nm57).